The sequence spans 281 residues: Pantothenate synthetase (281 aa).

31–38 (MGNLHAGH) contacts ATP. The Proton donor role is filled by His-38. A (R)-pantoate-binding site is contributed by Gln-62. Gln-62 provides a ligand contact to beta-alanine. ATP is bound at residue 150–153 (GKKD). Residue Gln-156 participates in (R)-pantoate binding. ATP is bound by residues Val-179 and 187–190 (MSSR).

It belongs to the pantothenate synthetase family. Homodimer.

The protein localises to the cytoplasm. The catalysed reaction is (R)-pantoate + beta-alanine + ATP = (R)-pantothenate + AMP + diphosphate + H(+). It functions in the pathway cofactor biosynthesis; (R)-pantothenate biosynthesis; (R)-pantothenate from (R)-pantoate and beta-alanine: step 1/1. Its function is as follows. Catalyzes the condensation of pantoate with beta-alanine in an ATP-dependent reaction via a pantoyl-adenylate intermediate. This Xylella fastidiosa (strain M23) protein is Pantothenate synthetase.